A 461-amino-acid polypeptide reads, in one-letter code: uncharacterized protein (461 aa).

The disordered stretch occupies residues 86-127 (KMKPNKDDDEEEDEDDEDDEDDEEEDNEEEDNEEENEITIAP). Positions 92–122 (DDDEEEDEDDEDDEDDEEEDNEEEDNEEENE) are enriched in acidic residues. 2 coiled-coil regions span residues 95–123 (EEEDEDDEDDEDDEEEDNEEEDNEEENEI) and 405–459 (NKYI…KLKK).

This sequence belongs to the mimivirus L5 family.

This is an uncharacterized protein from Acanthamoeba polyphaga mimivirus (APMV).